The primary structure comprises 220 residues: WAP four-disulfide core domain protein 1 (220 aa).

An N-terminal signal peptide occupies residues 1-31 (MPLTGVGPGSCRRQIIRALCLLLLLLHAGSA). The segment at 46 to 70 (KSRAEEAGAPGGPRQPRADRCPPPP) is disordered. Residues 59 to 108 (RQPRADRCPPPPRTLPPGACQAARCQADSECPRHRRCCYNGCAYACLEAV) enclose the WAP domain. Disulfide bonds link Cys66–Cys96, Cys78–Cys100, Cys83–Cys95, and Cys89–Cys104. Positions 199–220 (EYPEGDSKNVAEPGRGQQKHFQ) are disordered.

It localises to the secreted. In terms of biological role, has growth inhibitory activity. This chain is WAP four-disulfide core domain protein 1 (WFDC1), found in Homo sapiens (Human).